A 395-amino-acid chain; its full sequence is 1-deoxy-D-xylulose 5-phosphate reductoisomerase (395 aa).

Positions 10, 11, 12, 13, 37, 38, and 124 each coordinate NADPH. K125 contributes to the 1-deoxy-D-xylulose 5-phosphate binding site. E126 contacts NADPH. Mn(2+) is bound at residue D150. Residues S151, E152, S179, and H202 each coordinate 1-deoxy-D-xylulose 5-phosphate. Position 152 (E152) interacts with Mn(2+). G208 serves as a coordination point for NADPH. Residues S215, N220, K221, and E224 each coordinate 1-deoxy-D-xylulose 5-phosphate. E224 is a Mn(2+) binding site.

Belongs to the DXR family. Mg(2+) is required as a cofactor. It depends on Mn(2+) as a cofactor.

The catalysed reaction is 2-C-methyl-D-erythritol 4-phosphate + NADP(+) = 1-deoxy-D-xylulose 5-phosphate + NADPH + H(+). It participates in isoprenoid biosynthesis; isopentenyl diphosphate biosynthesis via DXP pathway; isopentenyl diphosphate from 1-deoxy-D-xylulose 5-phosphate: step 1/6. Its function is as follows. Catalyzes the NADPH-dependent rearrangement and reduction of 1-deoxy-D-xylulose-5-phosphate (DXP) to 2-C-methyl-D-erythritol 4-phosphate (MEP). This Cupriavidus pinatubonensis (strain JMP 134 / LMG 1197) (Cupriavidus necator (strain JMP 134)) protein is 1-deoxy-D-xylulose 5-phosphate reductoisomerase.